Consider the following 225-residue polypeptide: Cytidylate kinase (225 aa).

ATP is bound at residue 10–18 (GPASSGKST).

It belongs to the cytidylate kinase family. Type 1 subfamily.

The protein resides in the cytoplasm. It catalyses the reaction CMP + ATP = CDP + ADP. The enzyme catalyses dCMP + ATP = dCDP + ADP. The chain is Cytidylate kinase from Streptococcus sanguinis (strain SK36).